A 540-amino-acid chain; its full sequence is Medium/long-chain-fatty-acid--[acyl-carrier-protein] ligase FadD10 (540 aa).

T177 provides a ligand contact to Mg(2+). The ATP site is built by I226, V316, and S320. E321 is a Mg(2+) binding site. D408 lines the ATP pocket.

This sequence belongs to the ATP-dependent AMP-binding enzyme family. Homodimer. Mg(2+) is required as a cofactor.

The protein localises to the cytoplasm. The enzyme catalyses a medium-chain fatty acid + holo-[ACP] + ATP = a medium-chain fatty acyl-[ACP] + AMP + diphosphate. It catalyses the reaction a medium-chain fatty acid + ATP + H(+) = a medium-chain fatty acyl-AMP + diphosphate. The catalysed reaction is a medium-chain fatty acyl-AMP + holo-[ACP] = a medium-chain fatty acyl-[ACP] + AMP + H(+). It carries out the reaction a long-chain fatty acid + holo-[ACP] + ATP = a long-chain fatty acyl-[ACP] + AMP + diphosphate. The enzyme catalyses a long-chain fatty acid + ATP + H(+) = a long-chain fatty acyl-AMP + diphosphate. It catalyses the reaction a long-chain fatty acyl-AMP + holo-[ACP] = a long-chain fatty acyl-[ACP] + AMP + H(+). The catalysed reaction is a (2E)-enoyl fatty acid + holo-[ACP] + ATP = a (2E)-enoyl-[ACP] + AMP + diphosphate. It carries out the reaction a (2E)-enoyl fatty acid + ATP + H(+) = a (2E)-2-fatty-enoyl-AMP + diphosphate. The enzyme catalyses a (2E)-2-fatty-enoyl-AMP + holo-[ACP] = a (2E)-enoyl-[ACP] + AMP + H(+). It catalyses the reaction a (3R)-3-isocyanyl-fatty acid + holo-[ACP] + ATP = a (3R)-3-isocyanyl-fatty acyl-[ACP] + AMP + diphosphate. The catalysed reaction is a (3R)-3-isocyanyl-fatty acid + ATP + H(+) = a (3R)-3-isocyanyl-fatty acyl-AMP + diphosphate. It carries out the reaction a (3R)-3-isocyanyl-fatty acyl-AMP + holo-[ACP] = a (3R)-3-isocyanyl-fatty acyl-[ACP] + AMP + H(+). It functions in the pathway lipid metabolism; fatty acid metabolism. Acyl:acyl-carrier protein ligase involved in the biosynthesis of a unique class of isonitrile lipopeptides (INLPs) that seem to function as virulence factors in M.tuberculosis and to play a role in metal acquisition. Catalyzes the activation of medium/long-chain fatty acids as acyl-adenylates (acyl-AMP), which are then transferred to the phosphopantetheine arm of the acyl-carrier protein (ACP) MT0109. Acts twice during the INLP pathway, catalyzing the activation of a (2E)-enoyl fatty acid as well as the corresponding (3R)-3-isocyanyl-fatty acid as acyl-adenylates (acyl-AMP), and then the acyl transfer to the dedicated acyl-carrier protein MT0109. This Mycobacterium tuberculosis (strain CDC 1551 / Oshkosh) protein is Medium/long-chain-fatty-acid--[acyl-carrier-protein] ligase FadD10 (fadD10).